A 652-amino-acid chain; its full sequence is DNA ligase (652 aa).

NAD(+)-binding positions include 29–33 (DSEYD), 78–79 (SL), and Glu107. Residue Lys109 is the N6-AMP-lysine intermediate of the active site. NAD(+)-binding residues include Arg130, Glu164, Lys278, and Lys302. Positions 395, 398, 413, and 418 each coordinate Zn(2+). A BRCT domain is found at 577 to 652 (VADAALSGLT…VRDEAWLESL (76 aa)).

It belongs to the NAD-dependent DNA ligase family. LigA subfamily. Requires Mg(2+) as cofactor. The cofactor is Mn(2+).

It catalyses the reaction NAD(+) + (deoxyribonucleotide)n-3'-hydroxyl + 5'-phospho-(deoxyribonucleotide)m = (deoxyribonucleotide)n+m + AMP + beta-nicotinamide D-nucleotide.. In terms of biological role, DNA ligase that catalyzes the formation of phosphodiester linkages between 5'-phosphoryl and 3'-hydroxyl groups in double-stranded DNA using NAD as a coenzyme and as the energy source for the reaction. It is essential for DNA replication and repair of damaged DNA. The chain is DNA ligase from Streptococcus pneumoniae (strain Taiwan19F-14).